We begin with the raw amino-acid sequence, 498 residues long: Glutathione synthetase large chain (498 aa).

Arg-128 serves as a coordination point for substrate. Position 146 (Glu-146) interacts with ATP. Glu-146 and Asn-148 together coordinate Mg(2+). Substrate-binding positions include 150–153 (ISVS), 233–235 (ERN), Gln-239, and 291–294 (RVGY). Lys-330 serves as a coordination point for ATP. Ser-356 carries the phosphoserine modification. ATP contacts are provided by residues 387–396 (KPQREGGGNN), Tyr-398, 420–423 (MRYI), and Glu-446. Residue Glu-391 participates in Mg(2+) binding. A substrate-binding site is contributed by Arg-473. Lys-475 and Glu-481 together coordinate ATP. Residue 484-485 (VA) coordinates substrate.

This sequence belongs to the eukaryotic GSH synthase family. Heterodimer composed of a large and a small chain. Mg(2+) serves as cofactor.

It catalyses the reaction gamma-L-glutamyl-L-cysteine + glycine + ATP = glutathione + ADP + phosphate + H(+). It functions in the pathway sulfur metabolism; glutathione biosynthesis; glutathione from L-cysteine and L-glutamate: step 2/2. In Schizosaccharomyces pombe (strain 972 / ATCC 24843) (Fission yeast), this protein is Glutathione synthetase large chain (gsa1).